A 614-amino-acid chain; its full sequence is Chaperone protein DnaK (614 aa).

Residue Thr174 is modified to Phosphothreonine; by autocatalysis. The disordered stretch occupies residues 576–614 (QTGGAAPGPDMGADPGAGGAQGDDNVVDAEYTEVDKDQK). Over residues 578–589 (GGAAPGPDMGAD) the composition is skewed to low complexity.

The protein belongs to the heat shock protein 70 family.

In terms of biological role, acts as a chaperone. This chain is Chaperone protein DnaK, found in Desulfitobacterium hafniense (strain DSM 10664 / DCB-2).